We begin with the raw amino-acid sequence, 353 residues long: MNGDQKLDVHNQEKQNFIQHFSQIVKVLTEDELGHPEKGDAITRIKEVLEYNTVGGKYNRGLTVVQTFQELVEPRKQDAESLQRALTVGWCVELLQAFFLVLDDIMDSSYTRRGQICWYQKPGIGLDAINDALLLEAAIYRLLKFYCREQPYYLNLLELFLQSSYQTEIGQTLDLITAPQGQVDLGRYTEKRYKSIVKYKTAFYSFYLPIAAAMYMAGIDGEKEHANALKILLEMGEFFQIQDDYLDLFGDPSVTGKVGTDIQDNKCSWLVVQCLLRATPQQRQILEENYGQKDPEKVARVKALYEELDLRSVFFKYEEDSYNRLKSLIEQCSAPLPPSIFLELANKIYKRRK.

Residues lysine 57, arginine 60, and glutamine 96 each contribute to the isopentenyl diphosphate site. N6-(2-hydroxyisobutyryl)lysine; alternate is present on lysine 57. An N6-acetyllysine; alternate modification is found at lysine 57. Mg(2+)-binding residues include aspartate 103 and aspartate 107. Arginine 112 lines the dimethylallyl diphosphate pocket. Arginine 113 is a binding site for isopentenyl diphosphate. Dimethylallyl diphosphate-binding residues include lysine 200, threonine 201, glutamine 240, lysine 257, and lysine 266.

The protein belongs to the FPP/GGPP synthase family. Homodimer. Interacts with RSAD2. The cofactor is Mg(2+). As to expression, testis, liver, kidney, brain and adrenal gland.

The protein resides in the cytoplasm. It carries out the reaction isopentenyl diphosphate + dimethylallyl diphosphate = (2E)-geranyl diphosphate + diphosphate. It catalyses the reaction isopentenyl diphosphate + (2E)-geranyl diphosphate = (2E,6E)-farnesyl diphosphate + diphosphate. Its pathway is isoprenoid biosynthesis; farnesyl diphosphate biosynthesis; farnesyl diphosphate from geranyl diphosphate and isopentenyl diphosphate: step 1/1. It participates in isoprenoid biosynthesis; geranyl diphosphate biosynthesis; geranyl diphosphate from dimethylallyl diphosphate and isopentenyl diphosphate: step 1/1. Inactivated by interferon-induced RSAD2. This inactivation may result of disruption of lipid rafts at the plasma membrane, and thus have an antiviral effect since many enveloped viruses need lipid rafts to bud efficiently out of the cell. Its function is as follows. Key enzyme in isoprenoid biosynthesis which catalyzes the formation of farnesyl diphosphate (FPP), a precursor for several classes of essential metabolites including sterols, dolichols, carotenoids, and ubiquinones. FPP also serves as substrate for protein farnesylation and geranylgeranylation. Catalyzes the sequential condensation of isopentenyl pyrophosphate with the allylic pyrophosphates, dimethylallyl pyrophosphate, and then with the resultant geranylpyrophosphate to the ultimate product farnesyl pyrophosphate. This is Farnesyl pyrophosphate synthase (Fdps) from Rattus norvegicus (Rat).